The primary structure comprises 94 residues: Ammonia regulation of amino acid uptake protein (94 aa).

2 repeats span residues 48 to 57 and 58 to 67; these read HHQIRRRTHQ.

Functionally, involved in ammonia regulation of the GAP1 permease. The sequence is that of Ammonia regulation of amino acid uptake protein (AUA1) from Saccharomyces cerevisiae (strain ATCC 204508 / S288c) (Baker's yeast).